We begin with the raw amino-acid sequence, 281 residues long: E2F-associated phosphoprotein (281 aa).

Methionine 1 is subject to N-acetylmethionine. Residues 1 to 27 form a disordered region; the sequence is MNRLQDDYDPYAVEEPSDEEPALSSSE. The span at 15–27 shows a compositional bias: acidic residues; that stretch reads EPSDEEPALSSSE. Serine 17 is subject to Phosphoserine. The residue at position 37 (threonine 37) is a Phosphothreonine. Phosphoserine occurs at positions 109 and 111. Residues 222-245 are disordered; it reads PENRRKRRSAKKMRSNPEDPAERE. Positions 225 to 235 are enriched in basic residues; it reads RRKRRSAKKMR. Over residues 236 to 245 the composition is skewed to basic and acidic residues; sequence SNPEDPAERE.

Interacts with E2F1. The C-terminal half binds the N-terminal of E2F1. Also interacts with E2F2 and E2F3, but not E2F4.

The protein localises to the cytoplasm. It is found in the nucleus. Its function is as follows. May play an important role in the fine-tuning of both major E2F1 activities, the regulation of the cell-cycle and the induction of apoptosis. Promotes S-phase entry, and inhibits p14(ARP) expression. This Mus musculus (Mouse) protein is E2F-associated phosphoprotein (Eapp).